The sequence spans 43 residues: AAPCFCPGKPDRGDLWILRGTCPGGYGYTSNCYKWPNICCYPH.

Disulfide bonds link cysteine 4–cysteine 39, cysteine 6–cysteine 32, and cysteine 22–cysteine 40.

It belongs to the sea anemone type 3 (BDS) potassium channel toxin family.

The protein localises to the secreted. Its subcellular location is the nematocyst. In terms of biological role, acts as a gating modifier on both Kv and Nav ion channels. Voltage-dependently inhibits voltage-gated potassium channels Kv3 (Kv3.1/KCNC1, Kv3.2/KCNC2 and Kv3.4/KCNC4). Slows inactivation of the voltage-gated sodium channel Nav1.7/SCN9A. Inhibits all Kv3.1, Kv3.2 and Kv3.4 by about 50% when tested at a voltage of +40 mV. May act by binding residues in voltage-sensing domains S3b and S4 of Kv3. Tests have been done on human Nav1.7/SCN9A and rat SCG neurons that mostly carry Nav1.7 channels (EC(50)=300 nM). This toxin also reduces blood pressure. This is DeltaKappa-actitoxin-Avd4b from Anemonia sulcata (Mediterranean snakelocks sea anemone).